The sequence spans 546 residues: Probable bifunctional SAT/APS kinase (546 aa).

The tract at residues 1–370 is sulfate adenylyltransferase; sequence MEKIKYLKSI…LAETYVPKHK (370 aa). An adenylsulfate kinase region spans residues 371–546; sequence QGFCVWLTGL…FLKKEGFIKD (176 aa). 379 to 386 serves as a coordination point for ATP; sequence GLPCAGKS. Residue serine 453 is the Phosphoserine intermediate of the active site.

This sequence in the N-terminal section; belongs to the sulfate adenylyltransferase family. It in the C-terminal section; belongs to the APS kinase family.

The catalysed reaction is sulfate + ATP + H(+) = adenosine 5'-phosphosulfate + diphosphate. The enzyme catalyses adenosine 5'-phosphosulfate + ATP = 3'-phosphoadenylyl sulfate + ADP + H(+). It participates in sulfur metabolism; hydrogen sulfide biosynthesis; sulfite from sulfate: step 1/3. It functions in the pathway sulfur metabolism; hydrogen sulfide biosynthesis; sulfite from sulfate: step 2/3. This Aquifex aeolicus (strain VF5) protein is Probable bifunctional SAT/APS kinase (sat/cysC).